The chain runs to 335 residues: Basic endochitinase B (335 aa).

Positions 1–33 are cleaved as a signal peptide; that stretch reads MPPQKENHRTLNKMKTNLFLFLIFSLLLSLSSA. The 42-residue stretch at 34–75 folds into the Chitin-binding type-1 domain; it reads EQCGRQAGGALCPNGLCCSEFGWCGNTEPYCKQPGCQSQCTP. 7 cysteine pairs are disulfide-bonded: cysteine 36–cysteine 51, cysteine 45–cysteine 57, cysteine 50–cysteine 64, cysteine 69–cysteine 73, cysteine 107–cysteine 169, cysteine 181–cysteine 189, and cysteine 288–cysteine 320. The Proton donor role is filled by glutamate 151. The propeptide at 329–335 is removed in mature form; sequence GLLEAAI. The Vacuolar targeting signal signature appears at 329–335; that stretch reads GLLEAAI.

The protein belongs to the glycosyl hydrolase 19 family. Chitinase class I subfamily. As to expression, high constitutive level in roots with lower levels in leaves and flowering shoots.

It is found in the vacuole. It catalyses the reaction Random endo-hydrolysis of N-acetyl-beta-D-glucosaminide (1-&gt;4)-beta-linkages in chitin and chitodextrins.. Defense against chitin-containing fungal pathogens. Seems particularly implicated in resistance to jasmonate-inducing pathogens such as A.brassicicola. In vitro antifungal activity against T.reesei, but not against A.solani, F.oxysporum, S.sclerotiorum, G.graminis and P.megasperma. In Arabidopsis thaliana (Mouse-ear cress), this protein is Basic endochitinase B (CHI-B).